We begin with the raw amino-acid sequence, 714 residues long: Fatty acid oxidation complex subunit alpha (714 aa).

Positions Met1–Pro190 are enoyl-CoA hydratase. A 3-hydroxyacyl-CoA dehydrogenase region spans residues Ala306–Gln714.

It in the N-terminal section; belongs to the enoyl-CoA hydratase/isomerase family. The protein in the central section; belongs to the 3-hydroxyacyl-CoA dehydrogenase family. In terms of assembly, heterotetramer of two alpha chains (FadJ) and two beta chains (FadI).

The protein localises to the cytoplasm. The enzyme catalyses a (3S)-3-hydroxyacyl-CoA = a (2E)-enoyl-CoA + H2O. It carries out the reaction a 4-saturated-(3S)-3-hydroxyacyl-CoA = a (3E)-enoyl-CoA + H2O. It catalyses the reaction a (3S)-3-hydroxyacyl-CoA + NAD(+) = a 3-oxoacyl-CoA + NADH + H(+). The catalysed reaction is (3S)-3-hydroxybutanoyl-CoA = (3R)-3-hydroxybutanoyl-CoA. Its pathway is lipid metabolism; fatty acid beta-oxidation. In terms of biological role, catalyzes the formation of a hydroxyacyl-CoA by addition of water on enoyl-CoA. Also exhibits 3-hydroxyacyl-CoA epimerase and 3-hydroxyacyl-CoA dehydrogenase activities. The polypeptide is Fatty acid oxidation complex subunit alpha (Escherichia coli (strain SMS-3-5 / SECEC)).